A 134-amino-acid polypeptide reads, in one-letter code: Peptide methionine sulfoxide reductase MsrB (134 aa).

One can recognise a MsrB domain in the interval 9–131 (DEYWRDKLDA…NSASIQLQKE (123 aa)). Zn(2+) is bound by residues Cys-48, Cys-51, Cys-97, and Cys-100. The active-site Nucleophile is the Cys-120.

The protein belongs to the MsrB Met sulfoxide reductase family. Zn(2+) is required as a cofactor.

The enzyme catalyses L-methionyl-[protein] + [thioredoxin]-disulfide + H2O = L-methionyl-(R)-S-oxide-[protein] + [thioredoxin]-dithiol. In Saccharophagus degradans (strain 2-40 / ATCC 43961 / DSM 17024), this protein is Peptide methionine sulfoxide reductase MsrB.